The sequence spans 274 residues: Prolyl 4-hydroxylase 13 (274 aa).

The Cytoplasmic segment spans residues M1–L10. The chain crosses the membrane as a helical; Signal-anchor for type II membrane protein span at residues V11–F31. Over N32–D274 the chain is Lumenal. The region spanning Y151–D270 is the Fe2OG dioxygenase domain. Fe cation contacts are provided by H169 and D171. The N-linked (GlcNAc...) asparagine glycan is linked to N242. H251 provides a ligand contact to Fe cation. K261 provides a ligand contact to 2-oxoglutarate.

Belongs to the P4HA family. Fe(2+) serves as cofactor. L-ascorbate is required as a cofactor. As to expression, expressed in epidermal root hair cells (trichoblasts) root hairless cells (atrichoblasts).

It localises to the endoplasmic reticulum membrane. It carries out the reaction L-prolyl-[collagen] + 2-oxoglutarate + O2 = trans-4-hydroxy-L-prolyl-[collagen] + succinate + CO2. In terms of biological role, catalyzes the post-translational formation of 4-hydroxyproline in -Xaa-Pro-Gly- sequences in proline-rich peptide sequences of plant glycoproteins and other proteins. Hydroxyprolines are important constituent of many plant cell wall glycoproteins such as extensins, hydroxyproline-rich glycoproteins, lectins and arabinogalactan proteins. Possesses high affinity for leucine-rich repeat and proline-rich extensins of root cell walls that are essential for root hair development. Hydroxyprolines define the subsequent O-glycosylation sites by arabinosyltransferases which elongate the O-arabinosides on extensins. In Arabidopsis thaliana (Mouse-ear cress), this protein is Prolyl 4-hydroxylase 13.